The sequence spans 112 residues: 2Fe-2S ferredoxin (112 aa).

In terms of domain architecture, 2Fe-2S ferredoxin-type spans 5–107 (IKVTFIVNDG…GIKVRLPSAT (103 aa)). [2Fe-2S] cluster contacts are provided by C42, C48, C51, and C88.

It belongs to the adrenodoxin/putidaredoxin family. [2Fe-2S] cluster is required as a cofactor.

Ferredoxin are iron-sulfur proteins that transfer electrons in a wide variety of metabolic reactions. The chain is 2Fe-2S ferredoxin (fdxB) from Rickettsia felis (strain ATCC VR-1525 / URRWXCal2) (Rickettsia azadi).